A 109-amino-acid chain; its full sequence is uncharacterized protein (109 aa).

The protein belongs to the archaeal ATPase family.

This is an uncharacterized protein from Methanocaldococcus jannaschii (strain ATCC 43067 / DSM 2661 / JAL-1 / JCM 10045 / NBRC 100440) (Methanococcus jannaschii).